Consider the following 116-residue polypeptide: Host transcription reprogramming factor 4 (116 aa).

A signal peptide spans 1 to 24 (MHIIHISKFMALLAISTIAIPTRG). The disordered stretch occupies residues 24 to 53 (GRSEVDSRDVNQAQTVTSGSSIAPSGSEKR). The span at 33–47 (VNQAQTVTSGSSIAP) shows a compositional bias: polar residues. The C2H2-type; degenerate zinc-finger motif lies at 74–96 (FQCPHCKDGISNRVALYTHVKAF).

Its subcellular location is the secreted. It is found in the host nucleus. In terms of biological role, probable secreted effector that translocates into the nuclei of host cells to reprogram the expression of targeted genes by binding on effector binding elements in rice. This is Host transcription reprogramming factor 4 from Pyricularia oryzae (strain 70-15 / ATCC MYA-4617 / FGSC 8958) (Rice blast fungus).